The chain runs to 196 residues: ATP-dependent Clp protease proteolytic subunit (196 aa).

Ser101 acts as the Nucleophile in catalysis. His126 is a catalytic residue.

This sequence belongs to the peptidase S14 family. In terms of assembly, component of the chloroplastic Clp protease core complex.

It localises to the plastid. The protein resides in the chloroplast stroma. The enzyme catalyses Hydrolysis of proteins to small peptides in the presence of ATP and magnesium. alpha-casein is the usual test substrate. In the absence of ATP, only oligopeptides shorter than five residues are hydrolyzed (such as succinyl-Leu-Tyr-|-NHMec, and Leu-Tyr-Leu-|-Tyr-Trp, in which cleavage of the -Tyr-|-Leu- and -Tyr-|-Trp bonds also occurs).. In terms of biological role, cleaves peptides in various proteins in a process that requires ATP hydrolysis. Has a chymotrypsin-like activity. Plays a major role in the degradation of misfolded proteins. The chain is ATP-dependent Clp protease proteolytic subunit from Gossypium hirsutum (Upland cotton).